The primary structure comprises 300 residues: Auxin-responsive protein IAA7 (300 aa).

Disordered stretches follow at residues 1-80 (MGEA…DGDK) and 92-125 (VSHS…LASN). The short motif at 43–47 (LSLGL) is the EAR-like (transcriptional repression) element. Over residues 92–103 (VSHSQGKANKNK) the composition is skewed to polar residues. Residues 177-281 (APFIKINMDG…SVKRLRVLKT (105 aa)) form the PB1 domain.

Belongs to the Aux/IAA family. Homodimers and heterodimers. Expressed at low levels in roots and shoots.

It localises to the nucleus. In terms of biological role, aux/IAA proteins are short-lived transcriptional factors that function as repressors of early auxin response genes at low auxin concentrations. The chain is Auxin-responsive protein IAA7 (IAA7) from Oryza sativa subsp. japonica (Rice).